Reading from the N-terminus, the 190-residue chain is GTP cyclohydrolase 1 (190 aa).

Zn(2+) contacts are provided by cysteine 75, histidine 78, and cysteine 146.

It belongs to the GTP cyclohydrolase I family. Toroid-shaped homodecamer, composed of two pentamers of five dimers.

The catalysed reaction is GTP + H2O = 7,8-dihydroneopterin 3'-triphosphate + formate + H(+). It participates in cofactor biosynthesis; 7,8-dihydroneopterin triphosphate biosynthesis; 7,8-dihydroneopterin triphosphate from GTP: step 1/1. In Campylobacter jejuni subsp. jejuni serotype O:23/36 (strain 81-176), this protein is GTP cyclohydrolase 1.